The chain runs to 312 residues: Malate dehydrogenase (312 aa).

NAD(+) is bound by residues 7 to 13 (GAAGGIG) and Asp34. The substrate site is built by Arg81 and Arg87. Residues Asn94 and 117 to 119 (ITN) contribute to the NAD(+) site. Asn119 and Arg153 together coordinate substrate. Residue His177 is the Proton acceptor of the active site. An NAD(+)-binding site is contributed by Met227.

Belongs to the LDH/MDH superfamily. MDH type 1 family. Homodimer.

The catalysed reaction is (S)-malate + NAD(+) = oxaloacetate + NADH + H(+). Catalyzes the reversible oxidation of malate to oxaloacetate. This is Malate dehydrogenase from Escherichia coli O139:H28 (strain E24377A / ETEC).